The chain runs to 376 residues: 1-deoxy-D-xylulose 5-phosphate reductoisomerase (376 aa).

The NADPH site is built by T12, G13, S14, I15, N39, and N116. K117 serves as a coordination point for 1-deoxy-D-xylulose 5-phosphate. E118 provides a ligand contact to NADPH. D142 lines the Mn(2+) pocket. Positions 143, 144, 164, and 187 each coordinate 1-deoxy-D-xylulose 5-phosphate. E144 lines the Mn(2+) pocket. G193 serves as a coordination point for NADPH. 1-deoxy-D-xylulose 5-phosphate-binding residues include S200, N205, K206, and E209. A Mn(2+)-binding site is contributed by E209.

It belongs to the DXR family. The cofactor is Mg(2+). Requires Mn(2+) as cofactor.

The catalysed reaction is 2-C-methyl-D-erythritol 4-phosphate + NADP(+) = 1-deoxy-D-xylulose 5-phosphate + NADPH + H(+). It participates in isoprenoid biosynthesis; isopentenyl diphosphate biosynthesis via DXP pathway; isopentenyl diphosphate from 1-deoxy-D-xylulose 5-phosphate: step 1/6. Functionally, catalyzes the NADPH-dependent rearrangement and reduction of 1-deoxy-D-xylulose-5-phosphate (DXP) to 2-C-methyl-D-erythritol 4-phosphate (MEP). The polypeptide is 1-deoxy-D-xylulose 5-phosphate reductoisomerase (Thermotoga maritima (strain ATCC 43589 / DSM 3109 / JCM 10099 / NBRC 100826 / MSB8)).